A 369-amino-acid polypeptide reads, in one-letter code: Uroporphyrinogen decarboxylase (369 aa).

Residues Met-1 to Leu-26 are disordered. Substrate-binding positions include Arg-56 to Arg-60, Asp-105, Tyr-180, Ser-235, and His-348.

It belongs to the uroporphyrinogen decarboxylase family. In terms of assembly, homodimer.

It localises to the cytoplasm. The enzyme catalyses uroporphyrinogen III + 4 H(+) = coproporphyrinogen III + 4 CO2. The protein operates within porphyrin-containing compound metabolism; protoporphyrin-IX biosynthesis; coproporphyrinogen-III from 5-aminolevulinate: step 4/4. Functionally, catalyzes the decarboxylation of four acetate groups of uroporphyrinogen-III to yield coproporphyrinogen-III. The sequence is that of Uroporphyrinogen decarboxylase from Frankia casuarinae (strain DSM 45818 / CECT 9043 / HFP020203 / CcI3).